The chain runs to 291 residues: uncharacterized protein (291 aa).

2 helical membrane passes run 42-62 (IFFFLILILVFVLWILVRALW) and 86-106 (TIFPCFISIFIVEPSFALALD).

This sequence belongs to the cytochrome c oxidase subunit 2 family.

The protein resides in the mitochondrion membrane. This is an uncharacterized protein from Arabidopsis thaliana (Mouse-ear cress).